The sequence spans 413 residues: Serine hydroxymethyltransferase (413 aa).

Residues Leu117 and 121 to 123 (GHL) contribute to the (6S)-5,6,7,8-tetrahydrofolate site. Lys226 is modified (N6-(pyridoxal phosphate)lysine). (6S)-5,6,7,8-tetrahydrofolate contacts are provided by residues Glu239 and 349-351 (SPF).

This sequence belongs to the SHMT family. In terms of assembly, homodimer. Requires pyridoxal 5'-phosphate as cofactor.

Its subcellular location is the cytoplasm. It carries out the reaction (6R)-5,10-methylene-5,6,7,8-tetrahydrofolate + glycine + H2O = (6S)-5,6,7,8-tetrahydrofolate + L-serine. It functions in the pathway one-carbon metabolism; tetrahydrofolate interconversion. It participates in amino-acid biosynthesis; glycine biosynthesis; glycine from L-serine: step 1/1. In terms of biological role, catalyzes the reversible interconversion of serine and glycine with tetrahydrofolate (THF) serving as the one-carbon carrier. This reaction serves as the major source of one-carbon groups required for the biosynthesis of purines, thymidylate, methionine, and other important biomolecules. Also exhibits THF-independent aldolase activity toward beta-hydroxyamino acids, producing glycine and aldehydes, via a retro-aldol mechanism. In Bacillus anthracis (strain A0248), this protein is Serine hydroxymethyltransferase.